The following is a 140-amino-acid chain: Putative pre-16S rRNA nuclease (140 aa).

Belongs to the YqgF nuclease family.

The protein localises to the cytoplasm. Could be a nuclease involved in processing of the 5'-end of pre-16S rRNA. The polypeptide is Putative pre-16S rRNA nuclease (Edwardsiella ictaluri (strain 93-146)).